Reading from the N-terminus, the 309-residue chain is MSDVLSKKQQFSLKKLNKSLRKSTGQAIADYNMIEEGDRVMVCLSGGKDSFTMLDILLELRAAAPIHFEIIAVNLDQKQPDFPEHILPEYLQKLGVDYKIVEEDTYSIVQDKIPEGKTTCSLCSRLRRGILYRTAKELGATKIALGHHRDDLLATLMLNMFFGGKLKSMPAKLVSDNGEHVVIRPLAYCKEKEIEAYAKLKEYPIIPCNLCGSQPNLQRQVTKNMLNEWDVKFPGRLETMFTAMQNVVPSHLSDTALFNFKEIDKSSGVIDGGDLAFDKEPIKHHTEDITPIETQYYQQHQAVKIKQLT.

The short motif at 45–50 (SGGKDS) is the PP-loop motif element. Cys-120, Cys-123, and Cys-211 together coordinate [4Fe-4S] cluster.

It belongs to the TtcA family. Homodimer. The cofactor is Mg(2+). Requires [4Fe-4S] cluster as cofactor.

It is found in the cytoplasm. The enzyme catalyses cytidine(32) in tRNA + S-sulfanyl-L-cysteinyl-[cysteine desulfurase] + AH2 + ATP = 2-thiocytidine(32) in tRNA + L-cysteinyl-[cysteine desulfurase] + A + AMP + diphosphate + H(+). It participates in tRNA modification. Functionally, catalyzes the ATP-dependent 2-thiolation of cytidine in position 32 of tRNA, to form 2-thiocytidine (s(2)C32). The sulfur atoms are provided by the cysteine/cysteine desulfurase (IscS) system. The protein is tRNA-cytidine(32) 2-sulfurtransferase of Psychromonas ingrahamii (strain DSM 17664 / CCUG 51855 / 37).